Reading from the N-terminus, the 638-residue chain is MTEKTIRLTTAQALVKFLNQQYIEVDGEMAPFVDGIFTLFGHGNVVGIGQALEEAPGHLKVYQGKNEQGMAHAAIAYAKQKNRQRIYACSTSAGPGSANLITAAGTALANNLPVLFLPADTFATRQPDPVLQQLEHESSTAITTNDGFQAVSRYFDRVQRPEQLMSALIRAFEVMTNPASAGPATICIAQDTEGEAFDYPVEFFQKRIHYLNRQIPTKRELTEAARLIKASKTPVIIVGGGARYSRAREELIALSEQTNIPLVETHAGKSTLEFDFKNNLGGTGILGTLAANKAIRDADLVIGIGTRYTDFTTSSKTAFDPTTKFININVSRMQTYKLDAFQVVGDAKATLAELAPLLKGYQTQFGNKIAAYKTEWLDERARLQTTKFNRETFTPEIKDQFDQAILNEYADRLQTEFTQTEALITINDNVAPDSIVVCSAGSLPGDLQRLWNPAVPDTYHLEYGYSCMGYEINGALGAKMAAAKKQEVYAIVGDGSFCMSHSELLTSLQYGKKINIMLFDNSGFGCINNLQMANGSDSFFCEFRDSDNQIMQVDYAKIAEGYGAKVYRANTKEDLISALEDAKTQSKTTLIEMKVLPKTMSEGYLNWWNVGVSEVSNKESIKQAYEEKQANLKNARLY.

Position 67 (E67) interacts with thiamine diphosphate. The interval 442–523 (SLPGDLQRLW…INIMLFDNSG (82 aa)) is thiamine pyrophosphate binding. Mg(2+)-binding residues include D494 and N521.

This sequence belongs to the TPP enzyme family. Mg(2+) is required as a cofactor. Thiamine diphosphate serves as cofactor.

It catalyses the reaction 3D-3,5/4-trihydroxycyclohexane-1,2-dione + H2O = 5-deoxy-D-glucuronate + H(+). The protein operates within polyol metabolism; myo-inositol degradation into acetyl-CoA; acetyl-CoA from myo-inositol: step 3/7. Involved in the cleavage of the C1-C2 bond of 3D-(3,5/4)-trihydroxycyclohexane-1,2-dione (THcHDO) to yield 5-deoxy-glucuronate (5DG). This is 3D-(3,5/4)-trihydroxycyclohexane-1,2-dione hydrolase from Listeria monocytogenes serotype 4b (strain F2365).